A 1040-amino-acid polypeptide reads, in one-letter code: Multidrug resistance protein MdtB (1040 aa).

Helical transmembrane passes span 25-45, 347-367, 369-389, 396-416, 440-460, 472-492, 537-557, 863-883, 888-908, 911-931, 968-988, and 998-1018; these read LLMVAILLAGIIGYQALPVSA, LMMAIALVVMIIYLFLRNIPA, IIPGVAVPLSLIGTFAVMVFL, LTLMALTIATGFVVDDAIVVI, IGFTIISLTFSLIAVLIPLLF, FAITLAVAILISAVVSLTLTP, WLTLSVALSTLLLSVLLWVFI, LGSTVWLIVAAVVAMYIVLGI, FIHPITILSTLPTAGVGALLA, IAGSELDVIAIIGIILLIGIV, ILMTTLAALLGALPLMLSTGV, and IGMVGGLIVSQVLTLFTTPVI.

This sequence belongs to the resistance-nodulation-cell division (RND) (TC 2.A.6) family. MdtB subfamily. In terms of assembly, part of a tripartite efflux system composed of MdtA, MdtB and MdtC. MdtB forms a heteromultimer with MdtC.

It localises to the cell inner membrane. Its function is as follows. The MdtABC tripartite complex confers resistance against novobiocin and deoxycholate. This Escherichia coli O127:H6 (strain E2348/69 / EPEC) protein is Multidrug resistance protein MdtB.